Reading from the N-terminus, the 469-residue chain is UDP-N-acetylmuramate--L-alanine ligase (469 aa).

122 to 128 contacts ATP; the sequence is GTHGKTT.

This sequence belongs to the MurCDEF family.

The protein resides in the cytoplasm. It catalyses the reaction UDP-N-acetyl-alpha-D-muramate + L-alanine + ATP = UDP-N-acetyl-alpha-D-muramoyl-L-alanine + ADP + phosphate + H(+). Its pathway is cell wall biogenesis; peptidoglycan biosynthesis. Functionally, cell wall formation. This Legionella pneumophila (strain Lens) protein is UDP-N-acetylmuramate--L-alanine ligase.